Consider the following 129-residue polypeptide: Chromatin accessibility complex protein 1 (129 aa).

At A2 the chain carries N-acetylalanine. N6-acetyllysine is present on K102. The stretch at 104–120 forms a coiled coil; it reads LKMLKEKREEEEDNEDD. The segment at 109–129 is disordered; sequence EKREEEEDNEDDGSDLGEALA. Over residues 112 to 123 the composition is skewed to acidic residues; sequence EEEEDNEDDGSD. At S122 the chain carries Phosphoserine.

In terms of assembly, heterodimer with POLE3; binds to DNA. Component of the CHRAC ISWI chromatin remodeling complex at least composed of SMARCA5/SNF2H, BAZ1A/ACF1, CHRAC1 and POLE3; the complex preferentially binds DNA through the CHRAC1-POLE3 heterodimer and possesses ATP-dependent nucleosome-remodeling activity. Within the complex, the heterodimer with POLE3 interacts with SMARCA5/SNF2H; the interaction is direct and enhances nucleosome sliding activity by the SMARCA5/SNF2H and BAZ1A/ACF1 interaction. Within the complex, the heterodimer with POLE3 interacts with BAZ1A/ACF1; the interactions are direct. As to expression, ubiquitously expressed.

The protein resides in the nucleus. Forms a complex with DNA polymerase epsilon subunit POLE3 and binds naked DNA, which is then incorporated into chromatin, aided by the nucleosome remodeling activity of ISWI/SNF2H and ACF1. Does not enhance nucleosome sliding activity of the ACF-5 ISWI chromatin remodeling complex. The sequence is that of Chromatin accessibility complex protein 1 (Chrac1) from Mus musculus (Mouse).